The primary structure comprises 90 residues: Small ribosomal subunit protein bS20 (90 aa).

The protein belongs to the bacterial ribosomal protein bS20 family.

Binds directly to 16S ribosomal RNA. The chain is Small ribosomal subunit protein bS20 from Mesomycoplasma hyopneumoniae (strain 232) (Mycoplasma hyopneumoniae).